The following is a 186-amino-acid chain: Transcriptional repressor NrdR (186 aa).

The segment at 3 to 34 (CPFCRHPDSRVVDSREAEEGAAIRRRRSCPAC) is a zinc-finger region. Residues 46–136 (LRVRKRSGAT…VYLAFESLGD (91 aa)) form the ATP-cone domain. The interval 149 to 169 (AGGGEPPVAGKPTTMPAATGA) is disordered.

This sequence belongs to the NrdR family. It depends on Zn(2+) as a cofactor.

Functionally, negatively regulates transcription of bacterial ribonucleotide reductase nrd genes and operons by binding to NrdR-boxes. The polypeptide is Transcriptional repressor NrdR (Parafrankia sp. (strain EAN1pec)).